Reading from the N-terminus, the 441-residue chain is Inner kinetochore subunit mis17 (441 aa).

The span at 160–173 (SSILENSPPNKVQR) shows a compositional bias: polar residues. Residues 160–240 (SSILENSPPN…TSSMAPRNLL (81 aa)) form a disordered region. The span at 174–183 (LSSLDSSQDS) shows a compositional bias: low complexity. Residues 192–201 (VTGTTFSSQA) show a composition bias toward polar residues. Low complexity predominate over residues 217-233 (SLTNQSSSLQSSLQTSS).

This sequence belongs to the CENP-U/AME1 family. In terms of assembly, component of the heterotetrameric kinetochore subcomplex COMA, which consists of fta2, fta7, mal2 and mis17. The COMA subcomplex is part of a larger constitutive centromere-associated network (CCAN) (also known as central kinetochore Sim4 complex in fission yeast), which is composed of at least cnl2, cnp3, cnp20, fta1, fta2, fta3, fta4, fta6, fta7, mal2, mhf1, mhf2, mis6, mis15, mis17, sim4 and wip1. Interacts with mis6 and mis15.

It localises to the nucleus. The protein resides in the chromosome. It is found in the centromere. The protein localises to the kinetochore. In terms of biological role, component of the kinetochore, a multiprotein complex that assembles on centromeric DNA and attaches chromosomes to spindle microtubules, mediating chromosome segregation and sister chromatid segregation during meiosis and mitosis. Component of the inner kinetochore COMA complex, which connects centromere-associated proteins and the outer kinetochore. COMA interacts with other inner kinetochore proteins to form the inner kinetochore constitutive centromere-associated network (CCAN), which serves as a structural platform for outer kinetochore assembly. This is Inner kinetochore subunit mis17 (mis17) from Schizosaccharomyces pombe (strain 972 / ATCC 24843) (Fission yeast).